The primary structure comprises 368 residues: Membrane glycoprotein UL18 (368 aa).

Positions 1-19 (MMTMWCLTLFVLWMLRVVG) are cleaved as a signal peptide. The helical transmembrane segment at 326–346 (ISSVLLALLLCALLFAFLHYF) threads the bilayer.

Interacts with host LILRB1.

It localises to the host membrane. Plays a role in the protection against host NK cell cytotoxicity by interacting with and modulating the activity of the host inhibitory leukocyte Ig-like receptor 1/LILRB1, which is expressed on monocytes, dendritic cells, as well as subsets of T and NK cells. UL18 exerts an inhibitory effect on LIR-1+ NK cells, while it stimulates LIR-1- NK cell. This chain is Membrane glycoprotein UL18 (UL18), found in Homo sapiens (Human).